Here is a 389-residue protein sequence, read N- to C-terminus: Formate-dependent phosphoribosylglycinamide formyltransferase (389 aa).

Residues 15-16 (EL) and Glu75 contribute to the N(1)-(5-phospho-beta-D-ribosyl)glycinamide site. ATP is bound by residues Arg107, Lys148, 153–158 (SSGKGQ), 188–191 (EEFL), and Glu196. The ATP-grasp domain occupies 112–302 (DLAAGELALR…EFELHLRAVL (191 aa)). Mg(2+) is bound by residues Glu261 and Glu273. N(1)-(5-phospho-beta-D-ribosyl)glycinamide-binding positions include Asp280, Lys350, and 357–358 (RR).

This sequence belongs to the PurK/PurT family. As to quaternary structure, homodimer.

It carries out the reaction N(1)-(5-phospho-beta-D-ribosyl)glycinamide + formate + ATP = N(2)-formyl-N(1)-(5-phospho-beta-D-ribosyl)glycinamide + ADP + phosphate + H(+). Its pathway is purine metabolism; IMP biosynthesis via de novo pathway; N(2)-formyl-N(1)-(5-phospho-D-ribosyl)glycinamide from N(1)-(5-phospho-D-ribosyl)glycinamide (formate route): step 1/1. Its function is as follows. Involved in the de novo purine biosynthesis. Catalyzes the transfer of formate to 5-phospho-ribosyl-glycinamide (GAR), producing 5-phospho-ribosyl-N-formylglycinamide (FGAR). Formate is provided by PurU via hydrolysis of 10-formyl-tetrahydrofolate. This chain is Formate-dependent phosphoribosylglycinamide formyltransferase, found in Synechococcus sp. (strain WH7803).